A 223-amino-acid chain; its full sequence is ATP phosphoribosyltransferase (223 aa).

This sequence belongs to the ATP phosphoribosyltransferase family. Short subfamily. In terms of assembly, heteromultimer composed of HisG and HisZ subunits.

It is found in the cytoplasm. It carries out the reaction 1-(5-phospho-beta-D-ribosyl)-ATP + diphosphate = 5-phospho-alpha-D-ribose 1-diphosphate + ATP. Its pathway is amino-acid biosynthesis; L-histidine biosynthesis; L-histidine from 5-phospho-alpha-D-ribose 1-diphosphate: step 1/9. Catalyzes the condensation of ATP and 5-phosphoribose 1-diphosphate to form N'-(5'-phosphoribosyl)-ATP (PR-ATP). Has a crucial role in the pathway because the rate of histidine biosynthesis seems to be controlled primarily by regulation of HisG enzymatic activity. This is ATP phosphoribosyltransferase from Sphingopyxis alaskensis (strain DSM 13593 / LMG 18877 / RB2256) (Sphingomonas alaskensis).